Consider the following 424-residue polypeptide: MNKIINNVFAREILDSRGYPTIEVEIELCDGAIGRASVPSGASTGKLEALELRDQDEKRYCGKGVLKAVQAVNGIIADEIIGMNAADQNAIDKALIELDGTKNKSKLGANATLGVSLAVAKAAANSFKMPLYRYLGGKQTSVMPVPLINIINGGVHADNKLDFQEFMILPVGAETFSEAIRISAEVFHNLRSILKKKGYSTNVGDEGGFAPNIESTEEALDLIIYAIESAGYSAQSDFALGLDVASSTFYEDGIYEFESKGLTSEELTEYYCNLVERYPIISIEDAMSEDDYEGWKLLTAKLGNKIQLVGDDLFVTNCELICKGIEEKMANAVLIKPNQIGTLTETFAAIEMAKSNGYKAVVSHRSGETEDTTISHIAVASNCGQIKTGSLSRSDRLAKYNELMRIESTLGKDAKYYRGLAWVL.

Gln164 contacts (2R)-2-phosphoglycerate. Glu206 (proton donor) is an active-site residue. Mg(2+) contacts are provided by Asp243, Glu284, and Asp311. (2R)-2-phosphoglycerate is bound by residues Lys336, Arg365, Ser366, and Lys387. Lys336 functions as the Proton acceptor in the catalytic mechanism.

It belongs to the enolase family. Requires Mg(2+) as cofactor.

Its subcellular location is the cytoplasm. The protein localises to the secreted. It localises to the cell surface. The enzyme catalyses (2R)-2-phosphoglycerate = phosphoenolpyruvate + H2O. It participates in carbohydrate degradation; glycolysis; pyruvate from D-glyceraldehyde 3-phosphate: step 4/5. Its function is as follows. Catalyzes the reversible conversion of 2-phosphoglycerate (2-PG) into phosphoenolpyruvate (PEP). It is essential for the degradation of carbohydrates via glycolysis. The protein is Enolase of Wolbachia sp. subsp. Drosophila simulans (strain wRi).